Here is a 169-residue protein sequence, read N- to C-terminus: Methane monooxygenase component A gamma chain (169 aa).

In terms of assembly, m.trichosporium has two forms of methane monooxygenase, a soluble and a membrane-bound type. The soluble type consists of four components (A to D): protein A, comprising three chains, in an alpha-2, beta-2, gamma-2 configuration, is a nonheme iron protein containing an unusual mu-hydroxo bridge structure at its active site and interacts with both oxygen and methane.

It carries out the reaction methane + NADH + O2 + H(+) = methanol + NAD(+) + H2O. The enzyme catalyses methane + NADPH + O2 + H(+) = methanol + NADP(+) + H2O. In terms of biological role, responsible for the initial oxygenation of methane to methanol in methanotrophs. It also catalyzes the monohydroxylation of a variety of unactivated alkenes, alicyclic, aromatic and heterocyclic compounds. This Methylosinus trichosporium protein is Methane monooxygenase component A gamma chain (mmoZ).